The chain runs to 430 residues: Protein translocase subunit SecY (430 aa).

10 consecutive transmembrane segments (helical) span residues V18 to G38, F67 to L87, I118 to G138, V145 to L165, G177 to I197, I213 to V233, V270 to F290, P309 to I329, F369 to A389, and D390 to L410.

Belongs to the SecY/SEC61-alpha family. In terms of assembly, component of the Sec protein translocase complex. Heterotrimer consisting of SecY, SecE and SecG subunits. The heterotrimers can form oligomers, although 1 heterotrimer is thought to be able to translocate proteins. Interacts with the ribosome. Interacts with SecDF, and other proteins may be involved. Interacts with SecA.

The protein resides in the cell membrane. The central subunit of the protein translocation channel SecYEG. Consists of two halves formed by TMs 1-5 and 6-10. These two domains form a lateral gate at the front which open onto the bilayer between TMs 2 and 7, and are clamped together by SecE at the back. The channel is closed by both a pore ring composed of hydrophobic SecY resides and a short helix (helix 2A) on the extracellular side of the membrane which forms a plug. The plug probably moves laterally to allow the channel to open. The ring and the pore may move independently. The chain is Protein translocase subunit SecY from Halalkalibacterium halodurans (strain ATCC BAA-125 / DSM 18197 / FERM 7344 / JCM 9153 / C-125) (Bacillus halodurans).